The sequence spans 515 residues: 2-isopropylmalate synthase (515 aa).

The Pyruvate carboxyltransferase domain maps to 4 to 266; the sequence is IKFFDTTLRD…ETRLNLQEIK (263 aa). The Mn(2+) site is built by D13, H201, H203, and N237. The tract at residues 391–515 is regulatory domain; that stretch reads QLSSIQVQYG…RAENEKVATS (125 aa).

Belongs to the alpha-IPM synthase/homocitrate synthase family. LeuA type 1 subfamily. As to quaternary structure, homodimer. Requires Mn(2+) as cofactor.

It localises to the cytoplasm. The catalysed reaction is 3-methyl-2-oxobutanoate + acetyl-CoA + H2O = (2S)-2-isopropylmalate + CoA + H(+). It participates in amino-acid biosynthesis; L-leucine biosynthesis; L-leucine from 3-methyl-2-oxobutanoate: step 1/4. Catalyzes the condensation of the acetyl group of acetyl-CoA with 3-methyl-2-oxobutanoate (2-ketoisovalerate) to form 3-carboxy-3-hydroxy-4-methylpentanoate (2-isopropylmalate). In Geobacillus stearothermophilus (Bacillus stearothermophilus), this protein is 2-isopropylmalate synthase.